We begin with the raw amino-acid sequence, 848 residues long: Neuroligin-3 (848 aa).

The signal sequence occupies residues 1–37 (MWLQLGLPSLSLSPTPTVGRSLCLILWFLSLVLRAST). Over 38-709 (QAPAPTVNTH…NPRDYSTELS (672 aa)) the chain is Extracellular. Asparagine 98 carries N-linked (GlcNAc...) asparagine glycosylation. An intrachain disulfide couples cysteine 106 to cysteine 141. The segment at 169–195 (CRKGGSGAKKQGEDLADNDGDEDEDIR) is disordered. Positions 182–194 (DLADNDGDEDEDI) are enriched in acidic residues. Cystine bridges form between cysteine 340/cysteine 351 and cysteine 510/cysteine 544. Residue asparagine 545 is glycosylated (N-linked (GlcNAc...) asparagine). Composition is skewed to polar residues over residues 645–656 (TKVPPPDTTHSS) and 677–689 (AYSNENAPGSWNG). Positions 645-691 (TKVPPPDTTHSSHITRRPNGKTWSTKRPAISPAYSNENAPGSWNGDQ) are disordered. A helical transmembrane segment spans residues 710-730 (VTIAVGASLLFLNVLAFAALY). Residues 731–848 (YRKDKRRQEP…LPNSHSTTRV (118 aa)) are Cytoplasmic-facing. Residue serine 745 is modified to Phosphoserine. Tyrosine 792 is modified (phosphotyrosine).

This sequence belongs to the type-B carboxylesterase/lipase family. As to quaternary structure, homodimer, and heterodimer with NLGN1 and NLGN2. Interacts with neurexins NRXN1, NRXN2 and NRXN3. Interaction with neurexins is mediated by heparan sulfate glycan modification on neurexin. Interacts (via its C-terminus) with DLG4/PSD-95 (via PDZ domain 3). In terms of processing, the N-terminus is blocked. Detected in brain and on hippocampus neurons, especially at excitatory synapses. Detected in retina (at protein level). Expressed in brain, spinal cord and dorsal root ganglion.

The protein resides in the cell membrane. The protein localises to the synapse. Its function is as follows. Cell surface protein involved in cell-cell-interactions via its interactions with neurexin family members. Plays a role in synapse function and synaptic signal transmission, and probably mediates its effects by recruiting and clustering other synaptic proteins. May promote the initial formation of synapses, but is not essential for this. May also play a role in glia-glia or glia-neuron interactions in the developing peripheral nervous system. The sequence is that of Neuroligin-3 (Nlgn3) from Rattus norvegicus (Rat).